A 479-amino-acid chain; its full sequence is Aldehyde dehydrogenase family 3 member B2 (479 aa).

Active-site residues include Glu223 and Cys257. The residue at position 476 (Cys476) is a Cysteine methyl ester. A lipid anchor (S-geranylgeranyl cysteine) is attached at Cys476. Residues Thr477–Leu479 constitute a propeptide, removed in mature form.

The protein belongs to the aldehyde dehydrogenase family. Geranylgeranylation is important for localization to lipid droplets and enzyme activity. In terms of tissue distribution, expressed in testis, white adipose tissue, lung, small intestine, kidney, spleen and liver.

It localises to the lipid droplet. It catalyses the reaction an aldehyde + NAD(+) + H2O = a carboxylate + NADH + 2 H(+). It carries out the reaction a long-chain fatty aldehyde + NAD(+) + H2O = a long-chain fatty acid + NADH + 2 H(+). The catalysed reaction is a medium-chain fatty aldehyde + NAD(+) + H2O = a medium-chain fatty acid + NADH + 2 H(+). The enzyme catalyses hexadecanoate + NADH + 2 H(+) = hexadecanal + NAD(+) + H2O. It catalyses the reaction octanal + NAD(+) + H2O = octanoate + NADH + 2 H(+). Its pathway is alcohol metabolism; ethanol degradation; acetate from ethanol: step 2/2. Oxidizes medium and long chain fatty aldehydes in lipid droplets into non-toxic fatty acids. The sequence is that of Aldehyde dehydrogenase family 3 member B2 from Mus musculus (Mouse).